The following is a 428-amino-acid chain: Elongation factor 1-alpha (428 aa).

Residues 5-225 form the tr-type G domain; the sequence is KPILNVAFIG…DAFQPPEKPT (221 aa). Positions 14–21 are G1; sequence GHVDAGKS. 14-21 lines the GTP pocket; it reads GHVDAGKS. S21 is a binding site for Mg(2+). The G2 stretch occupies residues 70–74; sequence GVTID. A G3 region spans residues 91-94; that stretch reads DCPG. GTP-binding positions include 91 to 95 and 149 to 152; these read DCPGH and NKMD. The tract at residues 149–152 is G4; it reads NKMD. Residues 189–191 form a G5 region; that stretch reads ASL.

The protein belongs to the TRAFAC class translation factor GTPase superfamily. Classic translation factor GTPase family. EF-Tu/EF-1A subfamily.

It localises to the cytoplasm. The enzyme catalyses GTP + H2O = GDP + phosphate + H(+). Its function is as follows. GTP hydrolase that promotes the GTP-dependent binding of aminoacyl-tRNA to the A-site of ribosomes during protein biosynthesis. This chain is Elongation factor 1-alpha, found in Methanococcus maripaludis (strain C7 / ATCC BAA-1331).